The following is a 501-amino-acid chain: Phosphatidylinositol 4-kinase type 2-beta (501 aa).

Disordered stretches follow at residues 1 to 30 and 65 to 122; these read MMAECDPTDGEPGNGSGDSTPETNFLSSEV and TELE…NHFP. The span at 17-27 shows a compositional bias: polar residues; it reads GDSTPETNFLS. Positions 76-88 are enriched in low complexity; the sequence is ALLLPGPAGSLSP. Over residues 99–117 the composition is skewed to polar residues; that stretch reads NMLSSSSDNLASPGNSSGE. In terms of domain architecture, PI3K/PI4K catalytic spans 141 to 471; it reads GVFPERISQG…VQMPRVVVER (331 aa). The interval 147–153 is G-loop; sequence ISQGSSG. ATP-binding residues include serine 154 and lysine 169. Residues 174-176 form an important for substrate binding region; the sequence is EPY. The important for interaction with membranes stretch occupies residues 182–195; that stretch reads KWTKYFHKVCCPCC. ATP is bound by residues 278–281 and 292–293; these read QLFV and RK. An important for interaction with membranes region spans residues 285–293; sequence HEADFWLRK. Positions 322–330 are catalytic loop; the sequence is RNTDRGNDN. The tract at residues 362–382 is activation loop; sequence AIDNGLAFPFKHPDEWRAYPF. Aspartate 364 contacts ATP. An important for interaction with membranes region spans residues 377–386; that stretch reads WRAYPFHWAW.

Belongs to the PI3/PI4-kinase family. Type II PI4K subfamily.

It localises to the cytoplasm. The protein localises to the cytosol. The protein resides in the golgi apparatus membrane. It is found in the endoplasmic reticulum membrane. Its subcellular location is the cell membrane. It localises to the early endosome membrane. It carries out the reaction a 1,2-diacyl-sn-glycero-3-phospho-(1D-myo-inositol) + ATP = a 1,2-diacyl-sn-glycero-3-phospho-(1D-myo-inositol 4-phosphate) + ADP + H(+). Its function is as follows. Contributes to the overall PI4-kinase activity of the cell. This contribution may be especially significant in plasma membrane, endosomal and Golgi compartments. The phosphorylation of phosphatidylinositol (PI) to PI4P is the first committed step in the generation of phosphatidylinositol 4,5-bisphosphate (PIP2), a precursor of the second messenger inositol 1,4,5-trisphosphate (InsP3). In Danio rerio (Zebrafish), this protein is Phosphatidylinositol 4-kinase type 2-beta (pi4k2b).